Reading from the N-terminus, the 434-residue chain is Cobyrinate a,c-diamide synthase (434 aa).

Positions 239–430 (KMAIAYDPAF…SHLHFSNFQL (192 aa)) constitute a GATase cobBQ-type domain. Catalysis depends on Cys-320, which acts as the Nucleophile.

The protein belongs to the CobB/CbiA family. The cofactor is Mg(2+).

It carries out the reaction cob(II)yrinate + 2 L-glutamine + 2 ATP + 2 H2O = cob(II)yrinate a,c diamide + 2 L-glutamate + 2 ADP + 2 phosphate + 2 H(+). It participates in cofactor biosynthesis; adenosylcobalamin biosynthesis; cob(II)yrinate a,c-diamide from sirohydrochlorin (anaerobic route): step 10/10. Functionally, catalyzes the ATP-dependent amidation of the two carboxylate groups at positions a and c of cobyrinate, using either L-glutamine or ammonia as the nitrogen source. The chain is Cobyrinate a,c-diamide synthase from Saccharolobus solfataricus (strain ATCC 35092 / DSM 1617 / JCM 11322 / P2) (Sulfolobus solfataricus).